A 221-amino-acid polypeptide reads, in one-letter code: NSEVKYSTVQNWYSGDENGKGGIYNFVTKRGLCAESNSKISWTQVETGSAITWKYPSCILAGNNSKGEFYSVALTNHYQQADTGSKMIHIGKNSRSKIISKGISTGNSINSYRGKVKVSLNASRARNYSQCDSLLIGNSSEANTFPYIEVYNRSSIIEHEASISKINEEKLFYFMQRGISIEEAISLIVSGFCKEVFTELPLEFALEADKLLGLKLEGSVG.

This sequence belongs to the iron-sulfur cluster assembly SufBD family.

It localises to the plastid. The protein localises to the chloroplast. This chain is Iron-sulfur cluster assembly SufBD family protein ycf24 (ycf24), found in Galdieria sulphuraria (Red alga).